We begin with the raw amino-acid sequence, 433 residues long: MRRFARVALLFLGCGVCSLLYGVSQLALSLEQEAGGARQRQARESAAPGGGRQAGSADGGEEGAGRCKNLSVSFWNSYWMLPSDVCGVNCFWEAAFRYTYMETQPSETMHLAVVACGERLEETITMLRSAIIFSIKPLHFHIFAEDQLHESFKDILDDFPYEGKVNYTLYPITFPSEGAKEWKKLFKPCASQRLFLPLILKDVDSLLYVDTDILFLRPVDDIWSFLRKFDSTQIAAMAPEHEEPRIGWYNRFARHPYYGVTGINSGVMLMNMTRIRRKYFKNDMTSVRLRWAEILMPLLKKYKLNITWGDQDLLNIMFFHNPESLYVFPCQWNYRPDHCIYGSNCKEAEEEGIFILHGNRGVYHDDKQPTFRAVYEAIKNYSFGDDLVRSLLQPLELELQKTVHTYCGRVYEVFIKQLKKSIKDLSVRRSKGS.

At 1 to 6 (MRRFAR) the chain is on the cytoplasmic side. A helical; Signal-anchor for type II membrane protein membrane pass occupies residues 7-29 (VALLFLGCGVCSLLYGVSQLALS). The Lumenal portion of the chain corresponds to 30–433 (LEQEAGGARQ…DLSVRRSKGS (404 aa)). The segment at 39–64 (QRQARESAAPGGGRQAGSADGGEEGA) is disordered. 5 N-linked (GlcNAc...) asparagine glycosylation sites follow: Asn-69, Asn-166, Asn-271, Asn-305, and Asn-380.

Belongs to the glycosyltransferase 8 family.

Its subcellular location is the membrane. The enzyme catalyses 3-O-(beta-D-glucosyl)-L-seryl-[EGF-like domain protein] + UDP-alpha-D-xylose = 3-O-[alpha-D-xylosyl-(1-&gt;3)-beta-D-glucosyl]-L-seryl-[EGF-like domain protein] + UDP + H(+). In terms of biological role, glycosyltransferase which elongates the O-linked glucose attached to EGF-like repeats in the extracellular domain of Notch proteins by catalyzing the addition of xylose. This chain is Glucoside xylosyltransferase 1 (GXYLT1), found in Gallus gallus (Chicken).